The sequence spans 304 residues: Acetyl-coenzyme A carboxylase carboxyl transferase subunit beta (304 aa).

The 270-residue stretch at 25 to 294 (LWIKCPETGE…KAIKRDTATE (270 aa)) folds into the CoA carboxyltransferase N-terminal domain.

It belongs to the AccD/PCCB family. In terms of assembly, acetyl-CoA carboxylase is a heterohexamer composed of biotin carboxyl carrier protein (AccB), biotin carboxylase (AccC) and two subunits each of ACCase subunit alpha (AccA) and ACCase subunit beta (AccD).

It localises to the cytoplasm. It catalyses the reaction N(6)-carboxybiotinyl-L-lysyl-[protein] + acetyl-CoA = N(6)-biotinyl-L-lysyl-[protein] + malonyl-CoA. It participates in lipid metabolism; malonyl-CoA biosynthesis; malonyl-CoA from acetyl-CoA: step 1/1. Component of the acetyl coenzyme A carboxylase (ACC) complex. Biotin carboxylase (BC) catalyzes the carboxylation of biotin on its carrier protein (BCCP) and then the CO(2) group is transferred by the transcarboxylase to acetyl-CoA to form malonyl-CoA. The protein is Acetyl-coenzyme A carboxylase carboxyl transferase subunit beta of Sinorhizobium medicae (strain WSM419) (Ensifer medicae).